Here is an 80-residue protein sequence, read N- to C-terminus: Large ribosomal subunit protein uL24 (80 aa).

Belongs to the universal ribosomal protein uL24 family. In terms of assembly, part of the 50S ribosomal subunit.

Functionally, one of two assembly initiator proteins, it binds directly to the 5'-end of the 23S rRNA, where it nucleates assembly of the 50S subunit. In terms of biological role, one of the proteins that surrounds the polypeptide exit tunnel on the outside of the subunit. The protein is Large ribosomal subunit protein uL24 of Chlorobaculum parvum (strain DSM 263 / NCIMB 8327) (Chlorobium vibrioforme subsp. thiosulfatophilum).